A 521-amino-acid chain; its full sequence is GMP synthase [glutamine-hydrolyzing] (521 aa).

Residues 5-197 enclose the Glutamine amidotransferase type-1 domain; sequence KILILDFGSQ…VLDICGAQPG (193 aa). Cys81 acts as the Nucleophile in catalysis. Catalysis depends on residues His171 and Glu173. One can recognise a GMPS ATP-PPase domain in the interval 198-390; that stretch reads WTMPNYIEEA…LGLPREMVYR (193 aa). 225–231 is a binding site for ATP; it reads SGGVDSS.

As to quaternary structure, homodimer.

It catalyses the reaction XMP + L-glutamine + ATP + H2O = GMP + L-glutamate + AMP + diphosphate + 2 H(+). The protein operates within purine metabolism; GMP biosynthesis; GMP from XMP (L-Gln route): step 1/1. Its function is as follows. Catalyzes the synthesis of GMP from XMP. The protein is GMP synthase [glutamine-hydrolyzing] (guaA) of Neisseria meningitidis serogroup B (strain ATCC BAA-335 / MC58).